A 511-amino-acid polypeptide reads, in one-letter code: Histidine ammonia-lyase 2 (511 aa).

The segment at residues 144-146 (SSG) is a cross-link (5-imidazolinone (Ser-Gly)). 2,3-didehydroalanine (Ser) is present on serine 145.

It belongs to the PAL/histidase family. Post-translationally, contains an active site 4-methylidene-imidazol-5-one (MIO), which is formed autocatalytically by cyclization and dehydration of residues Ser-Ser-Gly.

It is found in the cytoplasm. The catalysed reaction is L-histidine = trans-urocanate + NH4(+). The protein operates within amino-acid degradation; L-histidine degradation into L-glutamate; N-formimidoyl-L-glutamate from L-histidine: step 1/3. In Fusobacterium nucleatum subsp. nucleatum (strain ATCC 25586 / DSM 15643 / BCRC 10681 / CIP 101130 / JCM 8532 / KCTC 2640 / LMG 13131 / VPI 4355), this protein is Histidine ammonia-lyase 2 (hutH2).